The sequence spans 4328 residues: Cadherin-4 (4328 aa).

The first 23 residues, 1 to 23 (MKKHRVFHLFLLIFCKAISLVTT), serve as a signal peptide directing secretion. At 24–4072 (SSSTEQIFEF…TVLEFLLKAE (4049 aa)) the chain is on the extracellular side. N-linked (GlcNAc...) asparagine glycosylation is found at Asn-39 and Asn-56. Cadherin domains follow at residues 108–153 (PLNR…SPVF) and 156–275 (GEQG…NPNI). 7 N-linked (GlcNAc...) asparagine glycosylation sites follow: Asn-196, Asn-330, Asn-339, Asn-365, Asn-431, Asn-452, and Asn-584. 11 consecutive Cadherin domains span residues 384-492 (DNEK…APVF), 507-608 (PGDV…SPVF), 609-720 (SSFP…SPQF), 721-826 (DEVS…PPKC), 827-934 (VVQH…AIEF), 935-1051 (DDVA…KPMY), 1047-1156 (KKPM…SPTF), 1175-1262 (RIFA…PPEI), 1265-1363 (KKSD…RPKF), 1364-1467 (SASH…SPYF), and 1476-1570 (VDES…APET). N-linked (GlcNAc...) asparagine glycosylation is found at Asn-811 and Asn-899. Residues 1090–1092 (RGD) carry the Cell attachment site motif. N-linked (GlcNAc...) asparagine glycosylation is present at Asn-1192. The interval 1246–1267 (NSAGQKPRKSKNSPPEISGKKS) is disordered. A glycan (N-linked (GlcNAc...) asparagine) is linked at Asn-1335. A glycan (N-linked (GlcNAc...) asparagine) is linked at Asn-1610. Residues 1671–1784 (RRQVYRGTIR…IDENDEPPRF (114 aa)) enclose the Cadherin 14 domain. A glycan (N-linked (GlcNAc...) asparagine) is linked at Asn-1895. The Cadherin 15 domain maps to 1917-1984 (FSIVNPHEAF…ENINDETPIF (68 aa)). Asn-2059, Asn-2150, Asn-2216, Asn-2367, Asn-2413, Asn-2440, and Asn-2535 each carry an N-linked (GlcNAc...) asparagine glycan. Cadherin domains lie at 2187 to 2285 (EKLK…MPEF) and 2286 to 2397 (IRSD…PPRF). Cadherin domains are found at residues 2429–2505 (LQFS…PPFF), 2506–2608 (VLPF…VPRF), 2609–2712 (SNSH…APAF), 2719–2813 (FTIS…PPQF), 2828–2915 (SPIL…CPEA), 2913–3011 (PEAN…RPKI), 3012–3113 (IEKL…APTF), 3114–3216 (EKST…APKF), and 3217–3326 (EKEK…APTF). 5 N-linked (GlcNAc...) asparagine glycosylation sites follow: Asn-2844, Asn-2916, Asn-2941, Asn-3083, and Asn-3143. N-linked (GlcNAc...) asparagine glycosylation occurs at Asn-3330. 2 Cadherin domains span residues 3335 to 3428 (VQEG…APTM) and 3429 to 3554 (KPMK…VDEF). An N-linked (GlcNAc...) asparagine glycan is attached at Asn-3512. One can recognise an EGF-like 1 domain in the interval 3706–3744 (ETNQCAKSPCEQWQLCIPSVHNSTYECVCPLGMEGDKCS). 10 cysteine pairs are disulfide-bonded: Cys-3710-Cys-3721, Cys-3715-Cys-3732, Cys-3734-Cys-3743, Cys-3898-Cys-3925, Cys-3933-Cys-3944, Cys-3938-Cys-3954, Cys-3956-Cys-3965, Cys-3972-Cys-3983, Cys-3977-Cys-3992, and Cys-3994-Cys-4003. Asn-3727 carries N-linked (GlcNAc...) asparagine glycosylation. A Laminin G-like domain is found at 3757-3925 (EAELSVGGDG…MKLFGAQPGC (169 aa)). EGF-like domains lie at 3929–3966 (TSSP…NVCE) and 3968–4004 (DLEP…KHCE). Residue Asn-4043 is glycosylated (N-linked (GlcNAc...) asparagine). The chain crosses the membrane as a helical span at residues 4073 to 4093 (IVIVILGVLLLLLVFCLTFIT). Over 4094 to 4328 (WKCCKKNRDP…IDEEVNIHIS (235 aa)) the chain is Cytoplasmic. 2 disordered regions span residues 4143–4215 (TSSV…SSLR) and 4268–4311 (NFER…PISL). The span at 4178–4196 (TRRDPLPSDKFRRVDETAN) shows a compositional bias: basic and acidic residues. The Cell attachment site motif lies at 4207–4209 (RGD).

In terms of tissue distribution, in larvae and adult, it is expressed in various tissues including pharyngeal muscle, hypodermis and gonad. In the nervous system it is expressed in sensory neurons and motor neurons in the ventral cord.

It localises to the cell membrane. Functionally, potential calcium-dependent cell-adhesion protein that controls axon guidance in the ventral cord. The chain is Cadherin-4 from Caenorhabditis elegans.